A 771-amino-acid polypeptide reads, in one-letter code: Receptor like protein 22 (771 aa).

The N-terminal stretch at 1–20 (MSNLRLRLLSLVSILYCIAA) is a signal peptide. The Extracellular segment spans residues 21-729 (LRCRPDQTET…EEEEILEWRA (709 aa)). Residues N46, N58, N80, N93, N134, and N158 are each glycosylated (N-linked (GlcNAc...) asparagine). LRR repeat units lie at residues 86-110 (LSHL…AFGQ), 112-135 (NNLE…IRNL), 136-159 (TKLT…VQNL), 160-183 (TKLL…FFTM), 185-206 (FLSY…SNSS), 207-230 (SKLE…VLRL), 232-254 (NLRY…IFSP), 255-281 (LQSL…DFPK), 283-303 (MEIL…LKSL), 304-327 (KKLW…IWSL), 329-350 (LLVS…LDHV), and 353-377 (NSSV…PVSI). Residue N204 is glycosylated (N-linked (GlcNAc...) asparagine). N-linked (GlcNAc...) asparagine glycosylation occurs at N242. N292 is a glycosylation site (N-linked (GlcNAc...) asparagine). Residues N337, N344, N353, N379, N384, N397, N410, N421, N466, and N481 are each glycosylated (N-linked (GlcNAc...) asparagine). The stretch at 378 to 397 (INLSAWNNSFTGDIPLSVCN) is one LRR 13; degenerate repeat. LRR repeat units follow at residues 398–419 (RTSL…PPCM), 420–443 (GNFT…FYSG), 445–467 (LTQT…LLNC), 469–491 (FIRF…LKAL), 492–516 (PNLK…DQSS), 519–543 (FPKL…YFAN), 588–612 (LTFY…IGLL), 613–636 (KTLI…FANV), 637–660 (TELE…LGRL), and 662–685 (YLAY…QIIG). A glycan (N-linked (GlcNAc...) asparagine) is linked at N543. 3 N-linked (GlcNAc...) asparagine glycosylation sites follow: N619, N622, and N635. Residues 730–750 (AAIGYGPGVLFGLAIGHVVAL) form a helical membrane-spanning segment. Topologically, residues 751 to 771 (YKPGWFIKNNGQNRLRGIRHP) are cytoplasmic.

Belongs to the RLP family.

The protein localises to the cell membrane. The protein is Receptor like protein 22 of Arabidopsis thaliana (Mouse-ear cress).